Consider the following 601-residue polypeptide: Jacalin-related lectin 3 (601 aa).

3 Jacalin-type lectin domains span residues 13–155 (PASL…HTQP), 240–382 (AKTY…HVME), and 438–583 (PSGP…HMQH).

The protein belongs to the jacalin lectin family.

This is Jacalin-related lectin 3 (JAL3) from Arabidopsis thaliana (Mouse-ear cress).